The sequence spans 533 residues: Probable galacturonosyltransferase 13 (533 aa).

At 1–40 the chain is on the cytoplasmic side; the sequence is MQLHISPSMRSITISSSNEFIDLMKIKVAARHISYRTLFH. A helical; Signal-anchor for type II membrane protein membrane pass occupies residues 41 to 61; it reads TILILAFLLPFVFILTAVVTL. The Lumenal segment spans residues 62–533; sequence EGVNKCSSFD…DFIKNCHILE (472 aa). N-linked (GlcNAc...) asparagine glycans are attached at residues N306, N396, N445, and N520.

This sequence belongs to the glycosyltransferase 8 family. In terms of tissue distribution, expressed in roots, inflorescences, siliques, leaves and stems. Accumulates in pollen grains.

It localises to the golgi apparatus membrane. The protein operates within glycan metabolism; pectin biosynthesis. In terms of biological role, may be involved in pectin and/or xylans biosynthesis in cell walls. Together with GAUT14, required for pollen tube growth, possibly through the regulation of pectin biosynthesis and repartition in the pollen tube wall. The polypeptide is Probable galacturonosyltransferase 13 (Arabidopsis thaliana (Mouse-ear cress)).